Reading from the N-terminus, the 407-residue chain is Carbamoyl phosphate synthase small chain (407 aa).

Positions 1 to 205 (MTETTSKTAP…LADGYGEQDT (205 aa)) are CPSase. L-glutamine contacts are provided by Ser60, Gly257, and Gly259. The 189-residue stretch at 209–397 (HVVALDFGVK…INLIREKKGE (189 aa)) folds into the Glutamine amidotransferase type-1 domain. Cys286 acts as the Nucleophile in catalysis. 5 residues coordinate L-glutamine: Leu287, Gln290, Asn328, Gly330, and Phe331. Active-site residues include His370 and Glu372.

Belongs to the CarA family. As to quaternary structure, composed of two chains; the small (or glutamine) chain promotes the hydrolysis of glutamine to ammonia, which is used by the large (or ammonia) chain to synthesize carbamoyl phosphate. Tetramer of heterodimers (alpha,beta)4.

It catalyses the reaction hydrogencarbonate + L-glutamine + 2 ATP + H2O = carbamoyl phosphate + L-glutamate + 2 ADP + phosphate + 2 H(+). It carries out the reaction L-glutamine + H2O = L-glutamate + NH4(+). Its pathway is amino-acid biosynthesis; L-arginine biosynthesis; carbamoyl phosphate from bicarbonate: step 1/1. It participates in pyrimidine metabolism; UMP biosynthesis via de novo pathway; (S)-dihydroorotate from bicarbonate: step 1/3. In terms of biological role, small subunit of the glutamine-dependent carbamoyl phosphate synthetase (CPSase). CPSase catalyzes the formation of carbamoyl phosphate from the ammonia moiety of glutamine, carbonate, and phosphate donated by ATP, constituting the first step of 2 biosynthetic pathways, one leading to arginine and/or urea and the other to pyrimidine nucleotides. The small subunit (glutamine amidotransferase) binds and cleaves glutamine to supply the large subunit with the substrate ammonia. This is Carbamoyl phosphate synthase small chain from Brucella anthropi (strain ATCC 49188 / DSM 6882 / CCUG 24695 / JCM 21032 / LMG 3331 / NBRC 15819 / NCTC 12168 / Alc 37) (Ochrobactrum anthropi).